The chain runs to 855 residues: Oxysterol-binding protein-related protein 3 (855 aa).

Residues 1 to 32 (MSDEKNLGVSQKLVSPSRSTSSCSSKQGSRQD) form a disordered region. S15 and S33 each carry phosphoserine. The span at 15–31 (SPSRSTSSCSSKQGSRQ) shows a compositional bias: low complexity. One can recognise a PH domain in the interval 50–145 (PPVQKGFLLK…WVSKLRHHRM (96 aa)). The FFAT 1 signature appears at 161-167 (FFSGSSV). Residues S199, S250, S272, S277, S288, S291, S340, S393, S405, and S408 each carry the phosphoserine modification. The disordered stretch occupies residues 274-293 (PNLSTLDFGEEKSYSDGSEA). The interval 377–396 (DPPAVPKPGDNLAEENSRDE) is disordered. The FFAT 2 signature appears at 450–454 (LSLDN). The segment at 468 to 490 (PVLESSGEARSKRRTSLPAPGPN) is disordered.

It belongs to the OSBP family. Homodimer. Interacts with RRAS. Interacts (phosphorylated form) with VAPA. Interacts with OSBPL6. Phosphorylation is enhanced in vitro by phorbol-12-myristate-13-acetate (PMA), forskolin and calcium ionophore A23187. Phosphorylation seems to be stimulated in conditions of low cell-cell (or cell-matrix) adhesion. Expressed in spinal ganglia. Expressed in a subset of small lymphocytes (at protein level).

It localises to the endoplasmic reticulum membrane. The protein resides in the cytoplasm. It is found in the cytosol. Its subcellular location is the cell membrane. The protein localises to the cell projection. It localises to the filopodium tip. The protein resides in the nucleus membrane. Its function is as follows. Phosphoinositide-binding protein which associates with both cell and endoplasmic reticulum (ER) membranes. Can bind to the ER membrane protein VAPA and recruit VAPA to plasma membrane sites, thus linking these intracellular compartments. The ORP3-VAPA complex stimulates RRAS signaling which in turn attenuates integrin beta-1 (ITGB1) activation at the cell surface. With VAPA, may regulate ER morphology. Has a role in regulation of the actin cytoskeleton, cell polarity and cell adhesion. Binds to phosphoinositides with preference for PI(3,4)P2 and PI(3,4,5)P3. Also binds 25-hydroxycholesterol and cholesterol. The protein is Oxysterol-binding protein-related protein 3 (Osbpl3) of Mus musculus (Mouse).